Reading from the N-terminus, the 631-residue chain is Alpha-dioxygenase 2 (631 aa).

Positions 1–20 are cleaved as a signal peptide; that stretch reads MGFSPSSSWFLHPQLHHVVS. Heme b is bound at residue histidine 157. The active-site Proton acceptor is the tyrosine 378. Histidine 381 is a heme b binding site. A glycan (N-linked (GlcNAc...) asparagine) is linked at asparagine 583.

The protein belongs to the peroxidase family. Heme b serves as cofactor. Expressed in seedlings (cotyledons, young leaves, and hypocotyls), flowers, siliques and old leaves.

Alpha-dioxygenase that catalyzes the primary oxygenation of fatty acids into oxylipins. May be involved in the senescence process. This is Alpha-dioxygenase 2 (DOX2) from Arabidopsis thaliana (Mouse-ear cress).